The chain runs to 170 residues: Phosphopantetheine adenylyltransferase (170 aa).

T17 is a substrate binding site. ATP contacts are provided by residues 17-18 (TF) and H25. Substrate-binding residues include K49, L81, and R95. ATP is bound by residues 96 to 98 (GLR), E106, and 131 to 137 (LMYISST).

This sequence belongs to the bacterial CoaD family. As to quaternary structure, homohexamer. It depends on Mg(2+) as a cofactor.

The protein resides in the cytoplasm. It catalyses the reaction (R)-4'-phosphopantetheine + ATP + H(+) = 3'-dephospho-CoA + diphosphate. The protein operates within cofactor biosynthesis; coenzyme A biosynthesis; CoA from (R)-pantothenate: step 4/5. Reversibly transfers an adenylyl group from ATP to 4'-phosphopantetheine, yielding dephospho-CoA (dPCoA) and pyrophosphate. This chain is Phosphopantetheine adenylyltransferase, found in Legionella pneumophila subsp. pneumophila (strain Philadelphia 1 / ATCC 33152 / DSM 7513).